Here is a 297-residue protein sequence, read N- to C-terminus: MPLISDLLALCKLKVVALILFTAVVGMFLAVPAPYLPNGLLVLSASIGISMVAASAAVFNHVVDEQIDAQMSRTNQRPLPQGRVSKNQALVWGVFLGFIGLGILQLFVNIITVVLTFISLIGYTIVYTLYLKRATPQNIVIGGAAGATPPVLGWTAVSGTQGIEYACLLFLIVFIWTPPHFWALAIYRVEEYKKIDMPMLPVTHGLAYTRTQILLYTVLLLLVSLLPYLSGMSGLIYLVITIALGVRFLVYAIKIYNNPDDKMVAWSTFMYSINYLMLLFIALLFDHYWLISPWEIL.

The next 8 helical transmembrane spans lie at 15 to 35 (VVAL…PAPY), 39 to 59 (GLLV…AAVF), 91 to 111 (VWGV…VNII), 112 to 132 (TVVL…LYLK), 139 to 159 (IVIG…AVSG), 166 to 186 (ACLL…ALAI), 220 to 240 (LLLV…YLVI), and 265 to 285 (AWST…ALLF).

The protein belongs to the UbiA prenyltransferase family. Protoheme IX farnesyltransferase subfamily.

Its subcellular location is the cell inner membrane. The enzyme catalyses heme b + (2E,6E)-farnesyl diphosphate + H2O = Fe(II)-heme o + diphosphate. The protein operates within porphyrin-containing compound metabolism; heme O biosynthesis; heme O from protoheme: step 1/1. In terms of biological role, converts heme B (protoheme IX) to heme O by substitution of the vinyl group on carbon 2 of heme B porphyrin ring with a hydroxyethyl farnesyl side group. This Vesicomyosocius okutanii subsp. Calyptogena okutanii (strain HA) protein is Protoheme IX farnesyltransferase.